Consider the following 192-residue polypeptide: MNKRNYMNTSVQEPPLDYSFRSIHVTQDLLSEEPRTGLRPVRHAKSGKSMTQSLWLNNNVLTDLRDFNHAVSQLLEHPENLAWIDLSFNDLTSIDPVLTTFFNLSVLYLHGNSIQRLGEVNKLAALPRLRSLTLHGNPIEEEKGYRQYVLCTLPHITTFDFSGVTKADRTTAEVWKRMNIKPKKVRIKHNAL.

LRR repeat units follow at residues 50–71, 80–101, and 103–124; these read MTQS…NHAV, NLAW…LTTF, and NLSV…NKLA. In terms of domain architecture, LRRCT spans 137–175; the sequence is NPIEEEKGYRQYVLCTLPHITTFDFSGVTKADRTTAEVW.

It is found in the cytoplasm. This is Leucine-rich repeat-containing protein 51 from Bos taurus (Bovine).